Consider the following 248-residue polypeptide: Floral homeotic protein AGAMOUS (248 aa).

In terms of domain architecture, MADS-box spans 19–73 (RGKIEIKRIENTTNRQVTFCKRRNGLLKKAYELSVLCDAEVALIVFSSRGRLYEY). The K-box domain maps to 103-193 (AQYYQQEASK…RAKIAETERA (91 aa)). The interval 196 to 219 (QQQQQQMNLMPGSSSYELVPPPHQ) is disordered. Over residues 202-211 (MNLMPGSSSY) the composition is skewed to polar residues.

It localises to the nucleus. Functionally, probable transcription factor involved in regulating genes that determines stamen and carpel development in wild-type flowers. In Nicotiana tabacum (Common tobacco), this protein is Floral homeotic protein AGAMOUS (AG1).